Consider the following 287-residue polypeptide: 4,4'-diapophytoene synthase (287 aa).

(2E,6E)-farnesyl diphosphate is bound by residues 18 to 21 (HSKS), tyrosine 41, and arginine 45. Residues aspartate 48 and aspartate 52 each coordinate Mg(2+). Glutamine 165 is a (2E,6E)-farnesyl diphosphate binding site. Asparagine 168 contributes to the Mg(2+) binding site. Residue arginine 171 coordinates (2E,6E)-farnesyl diphosphate. Aspartate 172 lines the Mg(2+) pocket. Tyrosine 248 provides a ligand contact to (2E,6E)-farnesyl diphosphate.

This sequence belongs to the phytoene/squalene synthase family. CrtM subfamily. Mg(2+) serves as cofactor.

The enzyme catalyses 2 (2E,6E)-farnesyl diphosphate = 15-cis-4,4'-diapophytoene + 2 diphosphate. Its pathway is carotenoid biosynthesis; staphyloxanthin biosynthesis; staphyloxanthin from farnesyl diphosphate: step 1/5. Its function is as follows. Involved in the biosynthesis of the yellow-orange carotenoid staphyloxanthin, which plays a role in the virulence via its protective function against oxidative stress. Catalyzes the head-to-head condensation of two molecules of farnesyl diphosphate (FPP) into the colorless C(30) carotenoid 4,4'-diapophytoene (dehydrosqualene). The protein is 4,4'-diapophytoene synthase of Staphylococcus aureus.